Consider the following 195-residue polypeptide: Protein GrpE (195 aa).

The protein belongs to the GrpE family. As to quaternary structure, homodimer.

It localises to the cytoplasm. Functionally, participates actively in the response to hyperosmotic and heat shock by preventing the aggregation of stress-denatured proteins, in association with DnaK and GrpE. It is the nucleotide exchange factor for DnaK and may function as a thermosensor. Unfolded proteins bind initially to DnaJ; upon interaction with the DnaJ-bound protein, DnaK hydrolyzes its bound ATP, resulting in the formation of a stable complex. GrpE releases ADP from DnaK; ATP binding to DnaK triggers the release of the substrate protein, thus completing the reaction cycle. Several rounds of ATP-dependent interactions between DnaJ, DnaK and GrpE are required for fully efficient folding. This is Protein GrpE from Francisella tularensis subsp. mediasiatica (strain FSC147).